The primary structure comprises 260 residues: Hemin import ATP-binding protein HmuV (260 aa).

The 237-residue stretch at 6–242 folds into the ABC transporter domain; the sequence is LSGRNISMKY…ERIEQVYGYR (237 aa). 38–45 lines the ATP pocket; that stretch reads GPNGAGKS.

The protein belongs to the ABC transporter superfamily. Heme (hemin) importer (TC 3.A.1.14.5) family. As to quaternary structure, the complex is composed of two ATP-binding proteins (HmuV), two transmembrane proteins (HmuU) and a solute-binding protein (HmuT).

The protein resides in the cell inner membrane. Its function is as follows. Part of the ABC transporter complex HmuTUV involved in hemin import. Responsible for energy coupling to the transport system. The polypeptide is Hemin import ATP-binding protein HmuV (Vibrio parahaemolyticus serotype O3:K6 (strain RIMD 2210633)).